The chain runs to 458 residues: Lysine-rich nucleolar protein 1 (458 aa).

Basic and acidic residues predominate over residues 1–14 (MITKTHKVDLGLPE). Residues 1–21 (MITKTHKVDLGLPEKKKKKKV) are disordered. Residue Lys-7 forms a Glycyl lysine isopeptide (Lys-Gly) (interchain with G-Cter in SUMO2) linkage. Ser-42 and Ser-50 each carry phosphoserine. Residues 46 to 305 (ATSPSKSVAH…ESGVAGDPWK (260 aa)) form a disordered region. A compositionally biased stretch (basic residues) spans 64–73 (VKKKKKKKKG). Residue Lys-101 forms a Glycyl lysine isopeptide (Lys-Gly) (interchain with G-Cter in SUMO2) linkage. Ser-111 carries the post-translational modification Phosphoserine. A Glycyl lysine isopeptide (Lys-Gly) (interchain with G-Cter in SUMO2) cross-link involves residue Lys-130. Ser-132 is subject to Phosphoserine. Residues 145–155 (GKKLKKHKKEK) are compositionally biased toward basic residues. The span at 173–192 (EAREARDVGDTCSVGKKDEE) shows a compositional bias: basic and acidic residues. Residues 198 to 218 (QKRKRKSPREHNGKVKKKKKI) show a composition bias toward basic residues. Lys-249 participates in a covalent cross-link: Glycyl lysine isopeptide (Lys-Gly) (interchain with G-Cter in SUMO1); alternate. Lys-249 is covalently cross-linked (Glycyl lysine isopeptide (Lys-Gly) (interchain with G-Cter in SUMO2); alternate). Position 265 is a phosphoserine (Ser-265). The span at 265–274 (SAKKKMKSKK) shows a compositional bias: basic residues. Residues Lys-275, Lys-287, and Lys-305 each participate in a glycyl lysine isopeptide (Lys-Gly) (interchain with G-Cter in SUMO2) cross-link. The segment at 306–458 (EETDTDLEVV…NASKSVKLED (153 aa)) is interaction with ZNF106. A phosphothreonine mark is found at Thr-308 and Thr-310. Residues Lys-319, Lys-353, Lys-373, Lys-375, and Lys-407 each participate in a glycyl lysine isopeptide (Lys-Gly) (interchain with G-Cter in SUMO2) cross-link. Positions 336-353 (QEEIDRESGKTEASETRK) are enriched in basic and acidic residues. The interval 336 to 355 (QEEIDRESGKTEASETRKWT) is disordered. Residue Arg-430 is modified to Omega-N-methylarginine. Lys-442 is covalently cross-linked (Glycyl lysine isopeptide (Lys-Gly) (interchain with G-Cter in SUMO2)).

In terms of assembly, interacts with ZNF106.

Its subcellular location is the nucleus. It is found in the nucleolus. This is Lysine-rich nucleolar protein 1 (KNOP1) from Homo sapiens (Human).